A 346-amino-acid chain; its full sequence is Archaeosine synthase subunit beta (346 aa).

Positions 36 to 276 (GVQTKTLTVI…LRQAKAAHPE (241 aa)) constitute a Radical SAM core domain. Residues C51, C59, and C62 each contribute to the [4Fe-4S] cluster site.

It belongs to the radical SAM superfamily. RaSEA family. Forms a robust complex with the archaeosine synthase alpha subunit ArcS. This complex likely consists of an alpha(2)beta(2) heterotetrameric structure. [4Fe-4S] cluster is required as a cofactor.

It catalyses the reaction 7-N-[(5S)-5-amino-5-carboxypentyl]formamidino-7-deazaguanosine(15) in tRNA + S-adenosyl-L-methionine = archaeosine(15) in tRNA + L-1-piperideine-6-carboxylate + 5'-deoxyadenosine + L-methionine + 2 H(+). It participates in tRNA modification; archaeosine-tRNA biosynthesis. Radical SAM enzyme involved in the synthesis of archaeosine, a modified nucleoside present in the dihydrouridine loop (D-loop) of archaeal tRNAs. Catalyzes the cleavage of the C(epsilon)-N bond of the lysine moiety of q0kN15-tRNA, leading to the formation of archaeosine at position 15 in tRNAs. The chain is Archaeosine synthase subunit beta from Methanosarcina acetivorans (strain ATCC 35395 / DSM 2834 / JCM 12185 / C2A).